A 548-amino-acid polypeptide reads, in one-letter code: CTP synthase (548 aa).

The interval 1–270 (MTKYVFVTGG…DNIVCEALGL (270 aa)) is amidoligase domain. CTP is bound at residue serine 13. A UTP-binding site is contributed by serine 13. Residues 14–19 (SLGKGI) and aspartate 71 each bind ATP. Mg(2+)-binding residues include aspartate 71 and glutamate 144. CTP is bound by residues 151–153 (DIE), 191–196 (KTKPTQ), and lysine 227. UTP-binding positions include 191–196 (KTKPTQ) and lysine 227. A Glutamine amidotransferase type-1 domain is found at 295 to 545 (TIGMVGKYVD…IEAAIANHAR (251 aa)). Glycine 356 is an L-glutamine binding site. Catalysis depends on cysteine 383, which acts as the Nucleophile; for glutamine hydrolysis. L-glutamine contacts are provided by residues 384–387 (LGMQ), glutamate 407, and arginine 473. Catalysis depends on residues histidine 518 and glutamate 520.

This sequence belongs to the CTP synthase family. As to quaternary structure, homotetramer.

It catalyses the reaction UTP + L-glutamine + ATP + H2O = CTP + L-glutamate + ADP + phosphate + 2 H(+). It carries out the reaction L-glutamine + H2O = L-glutamate + NH4(+). The catalysed reaction is UTP + NH4(+) + ATP = CTP + ADP + phosphate + 2 H(+). The protein operates within pyrimidine metabolism; CTP biosynthesis via de novo pathway; CTP from UDP: step 2/2. With respect to regulation, allosterically activated by GTP, when glutamine is the substrate; GTP has no effect on the reaction when ammonia is the substrate. The allosteric effector GTP functions by stabilizing the protein conformation that binds the tetrahedral intermediate(s) formed during glutamine hydrolysis. Inhibited by the product CTP, via allosteric rather than competitive inhibition. Functionally, catalyzes the ATP-dependent amination of UTP to CTP with either L-glutamine or ammonia as the source of nitrogen. Regulates intracellular CTP levels through interactions with the four ribonucleotide triphosphates. The sequence is that of CTP synthase from Bordetella petrii (strain ATCC BAA-461 / DSM 12804 / CCUG 43448).